A 146-amino-acid chain; its full sequence is Ribonuclease VapC41 (146 aa).

One can recognise a PINc domain in the interval 3-142 (LCDTNIWLAL…FTQYGGIELR (140 aa)). Mg(2+)-binding residues include D5 and D112.

This sequence belongs to the PINc/VapC protein family. Requires Mg(2+) as cofactor.

Toxic component of a type II toxin-antitoxin (TA) system. An RNase. Its toxic effect is neutralized by coexpression with cognate antitoxin VapB41. The protein is Ribonuclease VapC41 of Mycobacterium tuberculosis (strain CDC 1551 / Oshkosh).